We begin with the raw amino-acid sequence, 953 residues long: Leucine-rich repeat receptor protein kinase HPCA1 (953 aa).

The first 23 residues, 1–23 (MSSRTGASLLLILFFFQICSVSA), serve as a signal peptide directing secretion. Residues 24-558 (LTNGLDASAL…EVSSKSSNKS (535 aa)) are Extracellular-facing. LRR repeat units lie at residues 64–88 (NDRV…ISFL), 89–113 (SELR…IGNL), 115–137 (KLRN…IGTL), 138–162 (KELI…GLLS), 164–187 (LYWF…TSAP), and 192–216 (LLQT…LFSS). Residue Asn-182 is glycosylated (N-linked (GlcNAc...) asparagine). N-linked (GlcNAc...) asparagine glycosylation occurs at Asn-217. LRR repeat units lie at residues 218–241 (MSLI…LSLV), 242–265 (KTLT…LNNL), 266–290 (TNLN…SLTS), 292–311 (YTLD…SWIS), 313–337 (LPSL…FFSP), 339–361 (QLQT…TDVS), and 362–384 (SQLE…ANKV). Asn-264, Asn-284, and Asn-298 each carry an N-linked (GlcNAc...) asparagine glycan. Residue Asn-411 is glycosylated (N-linked (GlcNAc...) asparagine). Disulfide bonds link Cys-421–Cys-424 and Cys-434–Cys-436. Residues Asn-456, Asn-459, Asn-510, and Asn-523 are each glycosylated (N-linked (GlcNAc...) asparagine). The helical transmembrane segment at 559–579 (ILIGAVVGVVVLLLLLTIAGI) threads the bilayer. At 580 to 953 (YALRQKKRAE…NFPASKLEPQ (374 aa)) the chain is on the cytoplasmic side. Ser-606 and Ser-607 each carry phosphoserine. The region spanning 631–905 (FSEANDVGGG…EVVKEIENIM (275 aa)) is the Protein kinase domain. Residues 637-645 (VGGGGYGKV) and Lys-659 each bind ATP. Asp-755 functions as the Proton acceptor in the catalytic mechanism. Phosphothreonine is present on residues Thr-786, Thr-789, and Thr-790. Residues 912–921 (PNSDSATSSR) are compositionally biased toward polar residues. Positions 912-953 (PNSDSATSSRTYEDAIKGSGDPYGSESFQYSGNFPASKLEPQ) are disordered. Ser-942 carries the phosphoserine modification.

This sequence belongs to the protein kinase superfamily. Ser/Thr protein kinase family. In terms of processing, autophosphorylated at Ser-606, Ser-607, Thr-786, Thr-789, Thr-790 and Ser-942 in response to extracellular hydrogen peroxide. In terms of tissue distribution, widely expressed.

Its subcellular location is the cell membrane. It carries out the reaction L-seryl-[protein] + ATP = O-phospho-L-seryl-[protein] + ADP + H(+). The enzyme catalyses L-threonyl-[protein] + ATP = O-phospho-L-threonyl-[protein] + ADP + H(+). Its activity is regulated as follows. Activated by autophosphorylation on serine and threonine residues in response to extracellular hydrogen peroxide. In terms of biological role, leucine-rich repeat receptor protein kinase that acts as sensor of extracellular hydrogen peroxide. Required for intracellular calcium influx in response to extracellular hydrogen peroxide. Mediates hydrogen peroxide-induced activation of calcium channels in guard cells and is required for stomatal closure. In Arabidopsis thaliana (Mouse-ear cress), this protein is Leucine-rich repeat receptor protein kinase HPCA1.